A 1860-amino-acid chain; its full sequence is Proprotein convertase subtilisin/kexin type 5 (1860 aa).

Residues 1-32 (MGWGSRCCCPGRLDLLCVLALLGGCLLPVCRT) form the signal peptide. Residues 33–114 (RVYTNHWAVK…QQVVKKRTKR (82 aa)) constitute a propeptide that is removed on maturation. Over 115-1743 (DYDFSRAQST…VRPATEHFKT (1629 aa)) the chain is Extracellular. The 320-residue stretch at 134–453 (MWYMHCSDNT…FGLMDAEAMV (320 aa)) folds into the Peptidase S8 domain. Residues Asp-171 and His-212 each act as charge relay system in the active site. Residues Asn-225 and Asn-381 are each glycosylated (N-linked (GlcNAc...) asparagine). Ser-386 acts as the Charge relay system in catalysis. Residues 461 to 601 (TVPRQHVCVE…SLVLYGTSVQ (141 aa)) form the P/Homo B domain. Residues 519-521 (RGD) carry the Cell attachment site motif. FU repeat units follow at residues 630–680 (EDYA…GHYH), 683–730 (KKRC…GSYQ), 734–777 (KNLC…GRYF), 779–824 (GQDC…SYYF), 832–879 (YKSC…GEYV), 882–927 (HGHC…WKFE), 929–979 (ENQC…GHYA), 982–1028 (GNTC…GEVQ), 1032–1077 (YEEC…KTYS), 1079–1121 (EVEC…GFYG), 1125–1168 (MGEC…KTQE), 1177–1221 (LRKL…GTWP), 1225–1272 (SGSC…GSYA), 1274–1318 (DGIC…RHVA), 1320–1363 (KGVC…GFYA), 1365–1411 (SRHC…GTYY), 1415–1461 (TKEC…SEYW), 1465–1510 (APGC…GYYA), 1514–1559 (SNRC…GYYA), 1563–1610 (TGRC…HYYV), 1614–1659 (TQTC…GEYR), and 1665–1712 (KFNC…SDPP). Residues 636 to 1727 (CDPECSEVGC…CDCQDTTDEC (1092 aa)) form a CRM (Cys-rich motif) region. Residue Asn-665 is glycosylated (N-linked (GlcNAc...) asparagine). N-linked (GlcNAc...) asparagine glycosylation is found at Asn-752, Asn-802, and Asn-852. Residues 869-913 (MGAICKDGEYVDEHGHCQTCEASCAKCQGPTQEDCTTCPMTRIFD) form the PLAC domain. Asn-1014 carries N-linked (GlcNAc...) asparagine glycosylation. Asn-1191 carries an N-linked (GlcNAc...) asparagine glycan. The N-linked (GlcNAc...) asparagine glycan is linked to Asn-1290. Residue Asn-1497 is glycosylated (N-linked (GlcNAc...) asparagine). Asn-1685 and Asn-1707 each carry an N-linked (GlcNAc...) asparagine glycan. Residues 1744–1764 (ALFITSSMMLVLLLGAAVVVW) traverse the membrane as a helical segment. Residues 1765–1860 (KKSRGRVQPA…YDDESYSYYQ (96 aa)) are Cytoplasmic-facing. AC regions lie at residues 1807–1826 (VIEY…IVYM) and 1838–1860 (YGLL…SYYQ).

Belongs to the peptidase S8 family. In terms of tissue distribution, expressed in T-lymphocytes.

Its subcellular location is the secreted. It is found in the endomembrane system. Its function is as follows. Serine endoprotease that processes various proproteins by cleavage at paired basic amino acids, recognizing the RXXX[KR]R consensus motif. Likely functions in the constitutive and regulated secretory pathways. Plays an essential role in pregnancy establishment by proteolytic activation of a number of important factors such as BMP2, CALD1 and alpha-integrins. In Homo sapiens (Human), this protein is Proprotein convertase subtilisin/kexin type 5 (PCSK5).